Reading from the N-terminus, the 76-residue chain is cAMP-dependent protein kinase inhibitor alpha (76 aa).

Residue Thr2 is modified to Blocked amino end (Thr). A disordered region spans residues 49-76 (KAEGEGDAQRNPSEQTGEAQGEAAKQES).

It belongs to the PKI family.

In terms of biological role, extremely potent competitive inhibitor of cAMP-dependent protein kinase activity, this protein interacts with the catalytic subunit of the enzyme after the cAMP-induced dissociation of its regulatory chains. This chain is cAMP-dependent protein kinase inhibitor alpha (PKIA), found in Gallus gallus (Chicken).